We begin with the raw amino-acid sequence, 118 residues long: Ly-6/neurotoxin-like protein 1 (118 aa).

The N-terminal stretch at 1–22 is a signal peptide; that stretch reads MTPLLTLFLVVLMGLPLAPVQA. Positions 23-107 constitute a UPAR/Ly6 domain; the sequence is LDCHVCAYNG…LAIPATLALA (85 aa). 5 disulfide bridges follow: cysteine 25–cysteine 48, cysteine 28–cysteine 35, cysteine 41–cysteine 66, cysteine 70–cysteine 87, and cysteine 88–cysteine 93. Residue serine 95 is the site of GPI-anchor amidated serine attachment. Positions 96–118 are cleaved as a propeptide — removed in mature form; sequence AGLAIPATLALAPVLLATLWGLL.

Interacts with nAChRs containing alpha-4:beta-2 (CHRNA4:CHRNB2) and alpha-7 (CHRNA7) subunits. Interacts with CHRNA4 probably in the endoplasmic reticulum prior to nAChR pentameric assembly. Interacts with KCNA2/Potassium voltage-gated channel subfamily A member 2. As to expression, expressed in lung predominantly in airway epithelial cells, submucous glands, and smooth muscle cells, in endothelial and smooth muscle cells in vessel walls and in alveolar type II cells (at protein level). Also expressed in brain.

The protein localises to the cell membrane. The protein resides in the cell projection. Its subcellular location is the dendrite. It is found in the endoplasmic reticulum. Acts in different tissues through interaction to nicotinic acetylcholine receptors (nAChRs). The proposed role as modulator of nAChR activity seems to be dependent on the nAChR subtype and stoichiometry, and to involve an effect on nAChR trafficking and its cell surface expression, and on single channel properties of the nAChR inserted in the plasma membrane. Modulates functional properties of nicotinic acetylcholine receptors (nAChRs) to prevent excessive excitation, and hence neurodegeneration. Enhances desensitization by increasing both the rate and extent of desensitization of alpha-4:beta-2-containing nAChRs and slowing recovery from desensitization. Promotes large amplitude ACh-evoked currents through alpha-4:beta-2 nAChRs. Is involved in regulation of the nAChR pentameric assembly in the endoplasmic reticulum. Shifts stoichiometry from high sensitivity alpha-4(2):beta-2(3) to low sensitivity alpha-4(3):beta-2(2) nAChR. In vitro modulates alpha-3:beta-4-containing nAChRs. Reduces cell surface expression of (alpha-3:beta-4)(2):beta-4 and (alpha-3:beta-4)(2):alpha-5 nAChRs suggesting an interaction with nAChR alpha-3(-):(+)beta-4 subunit interfaces and an allosteric mode. Corresponding single channel effects characterized by decreased unitary conductance, altered burst proportions and enhanced desensitization/inactivation seem to depend on nAChR alpha:alpha subunit interfaces and are greater in (alpha-3:beta-2)(2):alpha-3 when compared to (alpha-3:beta-2)(2):alpha-5 nAChRs. Prevents plasticity in the primary visual cortex late in life. This is Ly-6/neurotoxin-like protein 1 from Macaca mulatta (Rhesus macaque).